A 125-amino-acid chain; its full sequence is Diol dehydratase-reactivating factor small subunit (125 aa).

A Mg(2+)-binding site is contributed by glutamate 31.

It belongs to the DdrB/PduH family. Component of the DDR complex, a heterotetramer of DdrA(2)/DdrB(2). The DDR complex interacts with the diol dehydratase complex in the presence of ADP but not ATP. Mg(2+) is required as a cofactor.

The catalysed reaction is ATP + H2O = ADP + phosphate + H(+). In terms of biological role, small subunit of the diol dehydratase-reactivating factor (DDR), which reactivates suicidally inhibited adenosylcobalamin-dependent diol dehydratase (DD, pddA, pddB, pddC). DDR acts as a chaperone, reactivates inactivated DD holoenzyme in the presence of ATP, Mg(2+) and free adenosylcobalamin (AdoCbl), by mediating the exchange of the tightly bound damaged cofactor AdoCbl for a free intact one. Reactivation takes place in two steps: ADP-dependent cobalamin release, and ATP-dependent dissociation of the DD apoenzyme-DDR complex. DDR has weak ATPase activity which is required for DD reactivation. Activates glycerol-inactivated, O2-inactivated holoenzyme and inactivated enzyme-cyanocobalamin complex. Also reactivates glycerol-inactivated hologlycerol dehydratase, a DD isozyme. The sequence is that of Diol dehydratase-reactivating factor small subunit from Klebsiella michiganensis (strain ATCC 8724 / DSM 4798 / JCM 20051 / NBRC 3318 / NRRL B-199 / KCTC 1686 / BUCSAV 143 / CCM 1901).